The primary structure comprises 206 residues: Synaptosomal-associated protein 25 (206 aa).

Residues Met1–Gln20 show a composition bias toward basic and acidic residues. Residues Met1 to Ser25 are disordered. The segment at Met1–Glu75 is interaction with CENPF. The region spanning Asp19–Leu81 is the t-SNARE coiled-coil homology 1 domain. 4 S-palmitoyl cysteine lipidation sites follow: Cys85, Cys88, Cys90, and Cys92. The interval Gly111 to Val120 is interaction with ZDHHC17. Thr138 is subject to Phosphothreonine. A t-SNARE coiled-coil homology 2 domain is found at Asp140–Met202. Phosphoserine is present on residues Ser154 and Ser187.

It belongs to the SNAP-25 family. As to quaternary structure, part of the SNARE core complex containing SNAP25, VAMP2 and STX1A; this complex binds CPLX1. Found in a complex containing SYT1, SV2B and syntaxin-1. Found in a ternary complex with STX1A and VAMP8. Interacts with HSC70 and with SYT9, forming a complex with DNAJC5. The interaction with SYT9 is inhibited in presence of calcium. Isoform 1 and isoform 2 interact with BLOC1S6. Interacts with CENPF. Interacts with EQTN. Interacts with HGS. Interacts with KCNB1 (via N-terminus); reduces the voltage-dependent potassium channel KCNB1 activity in pancreatic beta cells. Interacts with OTOF. Interacts with RIMS1. Interacts with SNAPIN. Interacts with STXBP6. Interacts with TRIM9. Interacts with ZDHHC13 (via ANK repeats). Interacts with ZDHHC17 (via ANK repeats). Associates with the BLOC-1 complex. Interacts with PLCL1 (via C2 domain). Interacts with PRRT2; this interaction may impair the formation of the SNARE complex. Interacts with alpha-synuclein/SNCA. Interacts with PRPH2. Interacts with ROM1. Interacts with STX3. Post-translationally, palmitoylated. Cys-85 appears to be the main site, and palmitoylation is required for membrane association.

The protein resides in the cytoplasm. The protein localises to the perinuclear region. Its subcellular location is the cell membrane. It localises to the synapse. It is found in the synaptosome. The protein resides in the photoreceptor inner segment. In terms of biological role, t-SNARE involved in the molecular regulation of neurotransmitter release. May play an important role in the synaptic function of specific neuronal systems. Associates with proteins involved in vesicle docking and membrane fusion. Regulates plasma membrane recycling through its interaction with CENPF. Modulates the gating characteristics of the delayed rectifier voltage-dependent potassium channel KCNB1 in pancreatic beta cells. The polypeptide is Synaptosomal-associated protein 25 (SNAP25) (Pongo abelii (Sumatran orangutan)).